The chain runs to 146 residues: NADH-quinone oxidoreductase subunit A (146 aa).

3 helical membrane passes run 14–34, 66–86, and 96–116; these read FAVF…GAFF, FYLV…LYAW, and VGFI…VYLV.

Belongs to the complex I subunit 3 family. NDH-1 is composed of 13 different subunits. Subunits NuoA, H, J, K, L, M, N constitute the membrane sector of the complex.

The protein localises to the cell inner membrane. The catalysed reaction is a quinone + NADH + 5 H(+)(in) = a quinol + NAD(+) + 4 H(+)(out). In terms of biological role, NDH-1 shuttles electrons from NADH, via FMN and iron-sulfur (Fe-S) centers, to quinones in the respiratory chain. The immediate electron acceptor for the enzyme in this species is believed to be ubiquinone. Couples the redox reaction to proton translocation (for every two electrons transferred, four hydrogen ions are translocated across the cytoplasmic membrane), and thus conserves the redox energy in a proton gradient. This is NADH-quinone oxidoreductase subunit A from Serratia proteamaculans (strain 568).